Consider the following 221-residue polypeptide: Probable GTP-binding protein EngB (221 aa).

Residues 23-211 enclose the EngB-type G domain; that stretch reads PLREVAFAGR…DNLIIKWLFE (189 aa). 2 residues coordinate Mg(2+): Ser38 and Thr60.

The protein belongs to the TRAFAC class TrmE-Era-EngA-EngB-Septin-like GTPase superfamily. EngB GTPase family. Requires Mg(2+) as cofactor.

In terms of biological role, necessary for normal cell division and for the maintenance of normal septation. In Polynucleobacter asymbioticus (strain DSM 18221 / CIP 109841 / QLW-P1DMWA-1) (Polynucleobacter necessarius subsp. asymbioticus), this protein is Probable GTP-binding protein EngB.